Here is a 151-residue protein sequence, read N- to C-terminus: Allatostatin-A (151 aa).

An N-terminal signal peptide occupies residues 1-21 (MNSLHAHLLLLAVCCVGYIAS). Residues 22 to 54 (SPVIGQDQRSGDSDADVLLAADEMADNGGDNID) constitute a propeptide that is removed on maturation. Leucine amide occurs at positions 64, 88, and 99. The propeptide occupies 103–135 (SDYDYDQDNEIDYRVPPANYLAAERAVRPGRQN). The disordered stretch occupies residues 131 to 151 (PGRQNKRTTRPQPFNFGLGRR). Leucine amide is present on leucine 148.

This sequence belongs to the allatostatin family.

The protein resides in the secreted. In terms of biological role, may act as a neurotransmitter or neuromodulator. In Drosophila melanogaster (Fruit fly), this protein is Allatostatin-A (AstA).